The primary structure comprises 179 residues: Large ribosomal subunit protein uL6 (179 aa).

The protein belongs to the universal ribosomal protein uL6 family. As to quaternary structure, part of the 50S ribosomal subunit.

This protein binds to the 23S rRNA, and is important in its secondary structure. It is located near the subunit interface in the base of the L7/L12 stalk, and near the tRNA binding site of the peptidyltransferase center. In Chlorobium phaeobacteroides (strain BS1), this protein is Large ribosomal subunit protein uL6.